The sequence spans 123 residues: MPTINQLVRKGREEIRKKSSTPALQCCPQKRGVCVRVYTTTPKKPNSALRKIARVRLTNGIEVTSYIPGIGHNLQEHSVVLIRGGRVKDLPGVRYHIIRGTLDALGVADRKQGRSKYGTKRPK.

Asp-89 carries the post-translational modification 3-methylthioaspartic acid.

It belongs to the universal ribosomal protein uS12 family. In terms of assembly, part of the 30S ribosomal subunit. Contacts proteins S8 and S17. May interact with IF1 in the 30S initiation complex.

Its function is as follows. With S4 and S5 plays an important role in translational accuracy. Interacts with and stabilizes bases of the 16S rRNA that are involved in tRNA selection in the A site and with the mRNA backbone. Located at the interface of the 30S and 50S subunits, it traverses the body of the 30S subunit contacting proteins on the other side and probably holding the rRNA structure together. The combined cluster of proteins S8, S12 and S17 appears to hold together the shoulder and platform of the 30S subunit. This is Small ribosomal subunit protein uS12 from Syntrophobacter fumaroxidans (strain DSM 10017 / MPOB).